The sequence spans 51 residues: Zinc metalloproteinase-disintegrin-like crovidisin (51 aa).

The Peptidase M12B domain maps to 1–12 (AMVTKNNGDLDK). Residues 13-18 (SGTECR) enclose the Disintegrin domain. A glycan (N-linked (GlcNAc...) asparagine) is linked at Asn29.

This sequence belongs to the venom metalloproteinase (M12B) family. P-III subfamily. P-IIIa sub-subfamily. As to quaternary structure, monomer. Requires Zn(2+) as cofactor. Expressed by the venom gland.

It is found in the secreted. Its function is as follows. Snake venom zinc metalloproteinase-disintegrin-like that blocks the interaction between platelets and collagen fibers through its binding to collagen fibers, resulting in the blockade of collagen-mediated platelet functions such as adhesion, release reaction, thromboxane formation, and aggregation. Binds selectively to collagen type I with high affinity. Also exerts proteolytic activity to matrix. The sequence is that of Zinc metalloproteinase-disintegrin-like crovidisin from Crotalus viridis viridis (Prairie rattlesnake).